The primary structure comprises 210 residues: Syntaxin-binding protein 6 (210 aa).

Ser2 carries the post-translational modification N-acetylserine. The region spanning 151–210 is the v-SNARE coiled-coil homology domain; that stretch reads GNSILHSAADSVTSAVQKASQALNERGERLGRAEEKTEDMKNSAQQFAETAHKLAMKHKC.

Part of a ternary complex containing SNAP25 and STX1A that can be dissociated by NAPA and NSF. Interacts with STX4A.

The protein resides in the cytoplasm. It is found in the membrane. In terms of biological role, forms non-fusogenic complexes with SNAP25 and STX1A and may thereby modulate the formation of functional SNARE complexes and exocytosis. In Mus musculus (Mouse), this protein is Syntaxin-binding protein 6 (Stxbp6).